Consider the following 331-residue polypeptide: Biotin synthase (331 aa).

The 230-residue stretch at 52-281 folds into the Radical SAM core domain; sequence FFQNKVKLNM…TKEIRVSGGR (230 aa). Cys70, Cys74, and Cys77 together coordinate [4Fe-4S] cluster. Residues Cys114, Cys146, Cys206, and Arg276 each contribute to the [2Fe-2S] cluster site.

Belongs to the radical SAM superfamily. Biotin synthase family. Homodimer. [4Fe-4S] cluster is required as a cofactor. It depends on [2Fe-2S] cluster as a cofactor.

The enzyme catalyses (4R,5S)-dethiobiotin + (sulfur carrier)-SH + 2 reduced [2Fe-2S]-[ferredoxin] + 2 S-adenosyl-L-methionine = (sulfur carrier)-H + biotin + 2 5'-deoxyadenosine + 2 L-methionine + 2 oxidized [2Fe-2S]-[ferredoxin]. It participates in cofactor biosynthesis; biotin biosynthesis; biotin from 7,8-diaminononanoate: step 2/2. Catalyzes the conversion of dethiobiotin (DTB) to biotin by the insertion of a sulfur atom into dethiobiotin via a radical-based mechanism. The sequence is that of Biotin synthase from Bacillus pumilus (strain SAFR-032).